The chain runs to 138 residues: Small ribosomal subunit protein uS11c (138 aa).

The interval Met-1–Arg-23 is disordered. A compositionally biased stretch (basic residues) spans Gly-9–Arg-23.

This sequence belongs to the universal ribosomal protein uS11 family. In terms of assembly, part of the 30S ribosomal subunit.

It is found in the plastid. It localises to the chloroplast. The chain is Small ribosomal subunit protein uS11c from Aethionema grandiflorum (Persian stone-cress).